We begin with the raw amino-acid sequence, 171 residues long: Large ribosomal subunit protein uL10 (171 aa).

It belongs to the universal ribosomal protein uL10 family. As to quaternary structure, part of the ribosomal stalk of the 50S ribosomal subunit. The N-terminus interacts with L11 and the large rRNA to form the base of the stalk. The C-terminus forms an elongated spine to which L12 dimers bind in a sequential fashion forming a multimeric L10(L12)X complex.

Functionally, forms part of the ribosomal stalk, playing a central role in the interaction of the ribosome with GTP-bound translation factors. The polypeptide is Large ribosomal subunit protein uL10 (Lactococcus lactis subsp. cremoris (strain SK11)).